The primary structure comprises 367 residues: Biotin synthase (367 aa).

The Radical SAM core domain occupies 73–308 (CCGNTVDLCS…EQIIRYAGGR (236 aa)). [4Fe-4S] cluster is bound by residues cysteine 91, cysteine 95, and cysteine 98. Positions 136, 173, 233, and 303 each coordinate [2Fe-2S] cluster.

Belongs to the radical SAM superfamily. Biotin synthase family. As to quaternary structure, homodimer. [4Fe-4S] cluster is required as a cofactor. The cofactor is [2Fe-2S] cluster.

It carries out the reaction (4R,5S)-dethiobiotin + (sulfur carrier)-SH + 2 reduced [2Fe-2S]-[ferredoxin] + 2 S-adenosyl-L-methionine = (sulfur carrier)-H + biotin + 2 5'-deoxyadenosine + 2 L-methionine + 2 oxidized [2Fe-2S]-[ferredoxin]. It participates in cofactor biosynthesis; biotin biosynthesis; biotin from 7,8-diaminononanoate: step 2/2. Functionally, catalyzes the conversion of dethiobiotin (DTB) to biotin by the insertion of a sulfur atom into dethiobiotin via a radical-based mechanism. In Picosynechococcus sp. (strain ATCC 27264 / PCC 7002 / PR-6) (Agmenellum quadruplicatum), this protein is Biotin synthase.